A 435-amino-acid polypeptide reads, in one-letter code: Fibrous sheath-interacting protein 1 (435 aa).

Disordered stretches follow at residues 1-109 (MPMD…DPKL) and 354-393 (SQSH…ESRL). Residues 18 to 32 (SSSRSRPGSRSSNGS) are compositionally biased toward low complexity. Positions 50 to 63 (KLNSGQEGHTSNSG) are enriched in polar residues. Residues 64 to 87 (VEERRNSNDAKWADDSKTKPAKES) show a composition bias toward basic and acidic residues. Phosphoserine is present on residues Ser87 and Ser88. Residues 108–154 (KLEETNAVLQNAIRKMHRLDKLLAKKQCREKEVKKQGLEMRVKLWEE) adopt a coiled-coil conformation. Basic and acidic residues-rich tracts occupy residues 355–371 (QSHK…ERNT) and 378–393 (KILR…ESRL).

This sequence belongs to the FSIP1 family. In terms of assembly, may interact with AKAP4. In terms of tissue distribution, detected in male germ cells and testis.

The sequence is that of Fibrous sheath-interacting protein 1 (Fsip1) from Mus musculus (Mouse).